The following is a 185-amino-acid chain: CDP-diacylglycerol--glycerol-3-phosphate 3-phosphatidyltransferase (185 aa).

4 helical membrane passes run 7 to 26, 33 to 52, 89 to 108, and 151 to 172; these read IFLTIFRVILIPFFVIAFYL, FITTLIFFIAGVTDWLDGYL, FWITIPAIIMISREIIISAL, and IAAIILLYIAAILTIWSMIQYL.

This sequence belongs to the CDP-alcohol phosphatidyltransferase class-I family.

It localises to the cell membrane. It catalyses the reaction a CDP-1,2-diacyl-sn-glycerol + sn-glycerol 3-phosphate = a 1,2-diacyl-sn-glycero-3-phospho-(1'-sn-glycero-3'-phosphate) + CMP + H(+). Its pathway is phospholipid metabolism; phosphatidylglycerol biosynthesis; phosphatidylglycerol from CDP-diacylglycerol: step 1/2. Functionally, this protein catalyzes the committed step to the synthesis of the acidic phospholipids. The polypeptide is CDP-diacylglycerol--glycerol-3-phosphate 3-phosphatidyltransferase (pgsA) (Haemophilus influenzae (strain ATCC 51907 / DSM 11121 / KW20 / Rd)).